A 301-amino-acid chain; its full sequence is Light-independent protochlorophyllide reductase iron-sulfur ATP-binding protein (301 aa).

Low complexity predominate over residues 1 to 13 (MNVTLRPPLTTAP). The segment at 1–21 (MNVTLRPPLTTAPRRPDGAGS) is disordered. ATP is bound by residues 45–50 (GIGKST) and lysine 74. Serine 49 is a Mg(2+) binding site. Residues cysteine 130 and cysteine 164 each contribute to the [4Fe-4S] cluster site. ATP contacts are provided by residues 215–216 (NR) and 239–241 (PDL).

Belongs to the NifH/BchL/ChlL family. As to quaternary structure, homodimer. Protochlorophyllide reductase is composed of three subunits; BchL, BchN and BchB. Requires [4Fe-4S] cluster as cofactor.

It carries out the reaction chlorophyllide a + oxidized 2[4Fe-4S]-[ferredoxin] + 2 ADP + 2 phosphate = protochlorophyllide a + reduced 2[4Fe-4S]-[ferredoxin] + 2 ATP + 2 H2O. It participates in porphyrin-containing compound metabolism; bacteriochlorophyll biosynthesis (light-independent). In terms of biological role, component of the dark-operative protochlorophyllide reductase (DPOR) that uses Mg-ATP and reduced ferredoxin to reduce ring D of protochlorophyllide (Pchlide) to form chlorophyllide a (Chlide). This reaction is light-independent. The L component serves as a unique electron donor to the NB-component of the complex, and binds Mg-ATP. The protein is Light-independent protochlorophyllide reductase iron-sulfur ATP-binding protein of Bradyrhizobium sp. (strain BTAi1 / ATCC BAA-1182).